Reading from the N-terminus, the 51-residue chain is ATP synthase F(1) complex subunit epsilon, mitochondrial (51 aa).

N6-acetyllysine; alternate occurs at positions 21, 32, and 37. An N6-succinyllysine; alternate mark is found at Lys21, Lys32, and Lys37. Position 44 is an N6-acetyllysine (Lys44).

This sequence belongs to the eukaryotic ATPase epsilon family. As to quaternary structure, component of the ATP synthase complex composed at least of ATP5F1A/subunit alpha, ATP5F1B/subunit beta, ATP5MC1/subunit c (homooctomer), MT-ATP6/subunit a, MT-ATP8/subunit 8, ATP5ME/subunit e, ATP5MF/subunit f, ATP5MG/subunit g, ATP5MK/subunit k, ATP5MJ/subunit j, ATP5F1C/subunit gamma, ATP5F1D/subunit delta, ATP5F1E/subunit epsilon, ATP5PF/subunit F6, ATP5PB/subunit b, ATP5PD/subunit d, ATP5PO/subunit OSCP. ATP synthase complex consists of a soluble F(1) head domain (subunits alpha(3) and beta(3)) - the catalytic core - and a membrane F(0) domain - the membrane proton channel (subunits c, a, 8, e, f, g, k and j). These two domains are linked by a central stalk (subunits gamma, delta, and epsilon) rotating inside the F1 region and a stationary peripheral stalk (subunits F6, b, d, and OSCP).

Its subcellular location is the mitochondrion. The protein localises to the mitochondrion inner membrane. In terms of biological role, subunit epsilon, of the mitochondrial membrane ATP synthase complex (F(1)F(0) ATP synthase or Complex V) that produces ATP from ADP in the presence of a proton gradient across the membrane which is generated by electron transport complexes of the respiratory chain. ATP synthase complex consist of a soluble F(1) head domain - the catalytic core - and a membrane F(1) domain - the membrane proton channel. These two domains are linked by a central stalk rotating inside the F(1) region and a stationary peripheral stalk. During catalysis, ATP synthesis in the catalytic domain of F(1) is coupled via a rotary mechanism of the central stalk subunits to proton translocation. In vivo, can only synthesize ATP although its ATP hydrolase activity can be activated artificially in vitro. May be essential for the assembly of F(1) and may play an important role in the incorporation of the hydrophobic subunit c into the F(1)-c oligomer rotor of the mitochondrial ATP synthase complex. This chain is ATP synthase F(1) complex subunit epsilon, mitochondrial, found in Rattus norvegicus (Rat).